We begin with the raw amino-acid sequence, 124 residues long: MDEYSPKRHDIAQLKFLCETLYHDCLANLEESNHGWVNDPTSAINLQLNELIEHIATFALNYKIKYNEDNKLIEQIDEYLDDTFMLFSSYGINMQDLQKWRKSGNRLFRCFVNATKENPASLSC.

It belongs to the TomB family.

It localises to the cytoplasm. In terms of biological role, attenuates Hha toxicity and regulates biofilm formation. Binds to various coding and intergenic regions of genomic DNA. This Escherichia coli O157:H7 protein is Hha toxicity modulator TomB (tomB).